The chain runs to 57 residues: UPF0391 membrane protein bsl6560 (57 aa).

2 consecutive transmembrane segments (helical) span residues 4–24 (WVVT…GGIA) and 30–50 (IAKI…VVGL).

Belongs to the UPF0391 family.

The protein localises to the cell membrane. In Bradyrhizobium diazoefficiens (strain JCM 10833 / BCRC 13528 / IAM 13628 / NBRC 14792 / USDA 110), this protein is UPF0391 membrane protein bsl6560.